We begin with the raw amino-acid sequence, 277 residues long: Bleomycin hydrolase (277 aa).

Cys53 is an active-site residue.

The protein belongs to the peptidase C1 family. Homohexamer. Interacts with NUDT12 (via ANK repeats).

It is found in the cytoplasm. The protein localises to the cytoplasmic granule. The catalysed reaction is Inactivates bleomycin B2 (a cytotoxic glycometallopeptide) by hydrolysis of a carboxyamide bond of beta-aminoalanine, but also shows general aminopeptidase activity. The specificity varies somewhat with source, but amino acid arylamides of Met, Leu and Ala are preferred.. With respect to regulation, strongly inhibited by leupeptin, puromycin, NEM, and divalent cations. The normal physiological role of BLM hydrolase is unknown, but it catalyzes the inactivation of the antitumor drug BLM (a glycopeptide) by hydrolyzing the carboxamide bond of its B-aminoalaninamide moiety thus protecting normal and malignant cells from BLM toxicity. The protein is Bleomycin hydrolase (BLMH) of Oryctolagus cuniculus (Rabbit).